The sequence spans 159 residues: MSKPGGHARHGRRDGIDPVLRSRARRRALQAVYAWQIAGGFAKQVIAQFAHEQAHEVADLAYFESLVEGVLSNRSELDTALTPYLDRGVEEVDAIERAVLRLAAYELLYRQDVPYRVVINEAIETAKRFGSEHGHTYVNGVLDRAAVEWRKMESGASGA.

Belongs to the NusB family.

Functionally, involved in transcription antitermination. Required for transcription of ribosomal RNA (rRNA) genes. Binds specifically to the boxA antiterminator sequence of the ribosomal RNA (rrn) operons. The chain is Transcription antitermination protein NusB from Xanthomonas campestris pv. campestris (strain 8004).